The chain runs to 977 residues: Alanine--tRNA ligase (977 aa).

The interval 512–535 (SQVDSKLQSSTPAGTGSYDSKQVS) is disordered. Zn(2+)-binding residues include His-618, His-622, Cys-720, and His-724.

It belongs to the class-II aminoacyl-tRNA synthetase family. Zn(2+) is required as a cofactor.

The protein resides in the cytoplasm. It catalyses the reaction tRNA(Ala) + L-alanine + ATP = L-alanyl-tRNA(Ala) + AMP + diphosphate. In terms of biological role, catalyzes the attachment of alanine to tRNA(Ala) in a two-step reaction: alanine is first activated by ATP to form Ala-AMP and then transferred to the acceptor end of tRNA(Ala). Also edits incorrectly charged Ser-tRNA(Ala) and Gly-tRNA(Ala) via its editing domain. The polypeptide is Alanine--tRNA ligase (Leptospira interrogans serogroup Icterohaemorrhagiae serovar Lai (strain 56601)).